The primary structure comprises 475 residues: UDP-N-acetylmuramate--L-alanine ligase (475 aa).

ATP is bound at residue 112 to 118 (GTHGKTT).

Belongs to the MurCDEF family.

It is found in the cytoplasm. The enzyme catalyses UDP-N-acetyl-alpha-D-muramate + L-alanine + ATP = UDP-N-acetyl-alpha-D-muramoyl-L-alanine + ADP + phosphate + H(+). The protein operates within cell wall biogenesis; peptidoglycan biosynthesis. Cell wall formation. This chain is UDP-N-acetylmuramate--L-alanine ligase, found in Cupriavidus pinatubonensis (strain JMP 134 / LMG 1197) (Cupriavidus necator (strain JMP 134)).